The sequence spans 606 residues: tRNA 5-methylaminomethyl-2-thiouridine biosynthesis bifunctional protein MnmC (606 aa).

The interval 1 to 237 (MNSNSSVQFN…KRDMLCGHYL (237 aa)) is tRNA (mnm(5)s(2)U34)-methyltransferase. Positions 254-606 (IGGGISAACS…RRISVSRFKG (353 aa)) are FAD-dependent cmnm(5)s(2)U34 oxidoreductase.

It in the N-terminal section; belongs to the methyltransferase superfamily. tRNA (mnm(5)s(2)U34)-methyltransferase family. In the C-terminal section; belongs to the DAO family. It depends on FAD as a cofactor.

It is found in the cytoplasm. The catalysed reaction is 5-aminomethyl-2-thiouridine(34) in tRNA + S-adenosyl-L-methionine = 5-methylaminomethyl-2-thiouridine(34) in tRNA + S-adenosyl-L-homocysteine + H(+). Its function is as follows. Catalyzes the last two steps in the biosynthesis of 5-methylaminomethyl-2-thiouridine (mnm(5)s(2)U) at the wobble position (U34) in tRNA. Catalyzes the FAD-dependent demodification of cmnm(5)s(2)U34 to nm(5)s(2)U34, followed by the transfer of a methyl group from S-adenosyl-L-methionine to nm(5)s(2)U34, to form mnm(5)s(2)U34. This is tRNA 5-methylaminomethyl-2-thiouridine biosynthesis bifunctional protein MnmC from Idiomarina loihiensis (strain ATCC BAA-735 / DSM 15497 / L2-TR).